The primary structure comprises 430 residues: Adenylosuccinate synthetase (430 aa).

GTP is bound by residues 13–19 (GDEGKGK) and 41–43 (GHT). The active-site Proton acceptor is the aspartate 14. The Mg(2+) site is built by aspartate 14 and glycine 41. IMP is bound by residues 14-17 (DEGK), 39-42 (NAGH), threonine 130, arginine 144, glutamine 225, threonine 240, and arginine 304. The active-site Proton donor is the histidine 42. A substrate-binding site is contributed by 300–306 (ASTGRPR). Residues arginine 306, 332 to 334 (KLD), and 414 to 416 (STG) contribute to the GTP site.

This sequence belongs to the adenylosuccinate synthetase family. As to quaternary structure, homodimer. Mg(2+) serves as cofactor.

It is found in the cytoplasm. It carries out the reaction IMP + L-aspartate + GTP = N(6)-(1,2-dicarboxyethyl)-AMP + GDP + phosphate + 2 H(+). The protein operates within purine metabolism; AMP biosynthesis via de novo pathway; AMP from IMP: step 1/2. Functionally, plays an important role in the de novo pathway of purine nucleotide biosynthesis. Catalyzes the first committed step in the biosynthesis of AMP from IMP. The chain is Adenylosuccinate synthetase from Xanthomonas campestris pv. campestris (strain 8004).